The primary structure comprises 512 residues: RCC1 domain-containing protein DDB_G0279253 (512 aa).

8 RCC1 repeats span residues 1 to 56, 58 to 134, 135 to 185, 197 to 248, 249 to 319, 321 to 384, 386 to 443, and 454 to 512; these read MKIY…MIID, GDLY…ACDN, NGNI…NNNN, SGGV…ALSS, ENDV…LLDI, FKNV…LLTN, DKLY…IQVY, and NNNI…FILP. Polar residues predominate over residues 66 to 77; the sequence is NDSGQLGINSNE. 2 disordered regions span residues 66–85 and 162–200; these read NDSG…QQQQ and STSN…SGGV. Over residues 162-196 the composition is skewed to low complexity; it reads STSNNKNNNNNNNNNNNNNNNNNNNNNNNNNNNNN.

This is RCC1 domain-containing protein DDB_G0279253 from Dictyostelium discoideum (Social amoeba).